The primary structure comprises 526 residues: Cytochrome P450 monooxygenase patI (526 aa).

Topologically, residues 1 to 6 are cytoplasmic; sequence MDILQL. Residues 7–29 form a helical membrane-spanning segment; sequence APTHLLAILLSSTSALFLITYLL. Over 30–526 the chain is Lumenal; that stretch reads RAGHRPSDLP…EAQEVFARFD (497 aa). The N-linked (GlcNAc...) asparagine glycan is linked to Asn81. Cys446 provides a ligand contact to heme.

Belongs to the cytochrome P450 family. It depends on heme as a cofactor.

It localises to the endoplasmic reticulum membrane. It catalyses the reaction 3-hydroxybenzyl alcohol + reduced [NADPH--hemoprotein reductase] + O2 = gentisyl alcohol + oxidized [NADPH--hemoprotein reductase] + H2O + H(+). It participates in mycotoxin biosynthesis; patulin biosynthesis. In terms of biological role, cytochrome P450 monooxygenase; part of the gene cluster that mediates the biosynthesis of patulin, an acetate-derived tetraketide mycotoxin produced by several fungal species that shows antimicrobial properties against several bacteria. PatI catalyzes the conversion of m-hydroxybenzyl alcohol into gentisyl alcohol. The pathway begins with the synthesis of 6-methylsalicylic acid by the polyketide synthase (PKS) patK via condensation of acetate and malonate units. The 6-methylsalicylic acid decarboxylase patG then catalyzes the decarboxylation of 6-methylsalicylic acid to yield m-cresol (also known as 3-methylphenol). These first reactions occur in the cytosol. The intermediate m-cresol is then transported into the endoplasmic reticulum where the cytochrome P450 monooxygenase patH converts it to m-hydroxybenzyl alcohol, which is further converted to gentisyl alcohol by the cytochrome P450 monooxygenase patI. The oxidoreductases patJ and patO further convert gentisyl alcohol to isoepoxydon in the vacuole. PatN catalyzes then the transformation of isoepoxydon into phyllostine. The cluster protein patF is responsible for the conversion from phyllostine to neopatulin whereas the alcohol dehydrogenase patD converts neopatulin to E-ascladiol. The steps between isoepoxydon and E-ascladiol occur in the cytosol, and E-ascladiol is probably secreted to the extracellular space by one of the cluster-specific transporters patC or patM. Finally, the secreted patulin synthase patE catalyzes the conversion of E-ascladiol to patulin. The polypeptide is Cytochrome P450 monooxygenase patI (Penicillium expansum (Blue mold rot fungus)).